Reading from the N-terminus, the 1357-residue chain is DNA-directed RNA polymerase subunit beta (1357 aa).

Belongs to the RNA polymerase beta chain family. In terms of assembly, the RNAP catalytic core consists of 2 alpha, 1 beta, 1 beta' and 1 omega subunit. When a sigma factor is associated with the core the holoenzyme is formed, which can initiate transcription.

It carries out the reaction RNA(n) + a ribonucleoside 5'-triphosphate = RNA(n+1) + diphosphate. Functionally, DNA-dependent RNA polymerase catalyzes the transcription of DNA into RNA using the four ribonucleoside triphosphates as substrates. The chain is DNA-directed RNA polymerase subunit beta from Pseudomonas paraeruginosa (strain DSM 24068 / PA7) (Pseudomonas aeruginosa (strain PA7)).